The following is a 101-amino-acid chain: Small ribosomal subunit protein uS14 (101 aa).

The tract at residues 1 to 20 is disordered; that stretch reads MAKTSAVNRNKMRERMASRD. Residues 11–20 show a composition bias toward basic and acidic residues; sequence KMRERMASRD.

This sequence belongs to the universal ribosomal protein uS14 family. Part of the 30S ribosomal subunit. Contacts proteins S3 and S10.

Its function is as follows. Binds 16S rRNA, required for the assembly of 30S particles and may also be responsible for determining the conformation of the 16S rRNA at the A site. The protein is Small ribosomal subunit protein uS14 of Granulibacter bethesdensis (strain ATCC BAA-1260 / CGDNIH1).